A 1073-amino-acid polypeptide reads, in one-letter code: Serine/threonine-protein phosphatase 6 regulatory ankyrin repeat subunit C (1073 aa).

ANK repeat units lie at residues 7–36 (TDQP…NINV), 40–69 (ERRT…NVNA), 73–102 (VWLT…DVNA), 106–135 (YWQT…TVNV), 139–168 (TGRT…SLST), 172–201 (KDRQ…DVMC), 205–234 (KGYT…EIDE), 238–267 (FGNT…NVNQ), 271–301 (KGFT…DVNF), 305–334 (EGKS…EIDC), 338–367 (YGNT…DTAR), 371–400 (HDMF…LYSI), 422–451 (LGRT…DLRR), 455–484 (FGRT…SINE), 488–544 (KGCT…DPSL), 548–578 (QGYT…CLED), 583–612 (IPVS…NLDV), 616–645 (KGRT…SALV), 650–679 (RKWT…RADI), 686–715 (HGQT…TADA), 719–748 (RGRT…FVLC), 752–781 (KGRT…STDP), 789–818 (SGYS…FAYL), 821–851 (NPFT…KIVN), 856–885 (KGRT…EVDT), 889–919 (LGRT…NITV), 923–952 (NKNT…DLGL), and 959–988 (ALQM…TVLA).

In terms of assembly, protein phosphatase 6 (PP6) holoenzyme is proposed to be a heterotrimeric complex formed by the catalytic subunit, a SAPS domain-containing subunit (PP6R) and an ankyrin repeat-domain containing regulatory subunit (ARS).

Functionally, putative regulatory subunit of protein phosphatase 6 (PP6) that may be involved in the recognition of phosphoprotein substrates. This chain is Serine/threonine-protein phosphatase 6 regulatory ankyrin repeat subunit C (ANKRD52), found in Gallus gallus (Chicken).